The following is a 170-amino-acid chain: Fimbrial protein (170 aa).

A propeptide spans 1–7 (leader sequence); the sequence is MNTLQKG. An N-methylphenylalanine modification is found at Phe8. A helical membrane pass occupies residues 8-28; sequence FTLIELMIVIAIVGILAAVAL. Residue Ser70 is glycosylated (O-linked (Gal...) serine). The residue at position 100 (Ser100) is an O-(sn-1-glycerophosphoryl)serine. A disulfide bond links Cys127 and Cys163.

This sequence belongs to the N-Me-Phe pilin family. In terms of assembly, the pili are polar flexible filaments of about 5.4 nanometers diameter and 2.5 micrometers average length; they consist of only a single polypeptide chain arranged in a helical configuration of five subunits per turn in the assembled pilus. O-linked glycan has been reported to consist either of the Gal(alpha1-3) GlcNAc disaccharide, or the Gal(beta 1-4) Gal(alpha 1-3) 2,4-diacetamido-2,4,6-trideoxyhexose trisaccharide.

It is found in the fimbrium. The protein localises to the membrane. Major component of the type IV pilus (T4P) that plays a role in cellular adherence, microcolony formation as well as twitching motility. This chain is Fimbrial protein (pilE), found in Neisseria meningitidis serogroup B (strain ATCC BAA-335 / MC58).